Here is an 861-residue protein sequence, read N- to C-terminus: Nuclear pore complex protein NUP93A (861 aa).

This sequence belongs to the nucleoporin interacting component (NIC) family. Part of the nuclear pore complex (NPC). The NPC has an eight-fold symmetrical structure comprising a central transport channel and two rings, the cytoplasmic and nuclear rings, to which eight filaments are attached. The cytoplasmic filaments have loose ends, while the nuclear filaments are joined in a distal ring, forming a nuclear basket. NPCs are highly dynamic in configuration and composition, and can be devided in 3 subcomplexes, the NUP62 subcomplex, the NUP107-160 subcomplex and the NUP93 subcomplex, containing approximately 30 different nucleoporin proteins.

Its subcellular location is the nucleus envelope. It is found in the nucleus. The protein localises to the nuclear pore complex. This is Nuclear pore complex protein NUP93A from Arabidopsis thaliana (Mouse-ear cress).